The sequence spans 218 residues: Adenylate kinase (218 aa).

Residue 10–15 coordinates ATP; that stretch reads GAGKGT. Positions 30 to 59 are NMP; the sequence is STGDMLRAAVKAGTPLGLEAKKVMDAGGLV. AMP-binding positions include Thr31, Arg36, 57–59, 85–88, and Gln92; these read GLV and GFPR. Residues 122–159 form an LID region; sequence GRRVHPASGRVYHTKYNPPKVEGKDDETGDELVQRDDD. ATP-binding positions include Arg123 and 132 to 133; that span reads VY. The segment at 139-160 is disordered; sequence PPKVEGKDDETGDELVQRDDDQ. Residues Arg156 and Arg167 each coordinate AMP. Gly203 serves as a coordination point for ATP.

This sequence belongs to the adenylate kinase family. In terms of assembly, monomer.

The protein localises to the cytoplasm. The enzyme catalyses AMP + ATP = 2 ADP. Its pathway is purine metabolism; AMP biosynthesis via salvage pathway; AMP from ADP: step 1/1. Functionally, catalyzes the reversible transfer of the terminal phosphate group between ATP and AMP. Plays an important role in cellular energy homeostasis and in adenine nucleotide metabolism. The polypeptide is Adenylate kinase (Alcanivorax borkumensis (strain ATCC 700651 / DSM 11573 / NCIMB 13689 / SK2)).